Reading from the N-terminus, the 231-residue chain is Flagellar L-ring protein (231 aa).

Residues methionine 1 to glycine 20 form the signal peptide. Cysteine 21 is lipidated: N-palmitoyl cysteine. A lipid anchor (S-diacylglycerol cysteine) is attached at cysteine 21.

It belongs to the FlgH family. The basal body constitutes a major portion of the flagellar organelle and consists of four rings (L,P,S, and M) mounted on a central rod.

The protein resides in the cell outer membrane. It is found in the bacterial flagellum basal body. Assembles around the rod to form the L-ring and probably protects the motor/basal body from shearing forces during rotation. This chain is Flagellar L-ring protein, found in Desulfotalea psychrophila (strain LSv54 / DSM 12343).